A 222-amino-acid chain; its full sequence is Coiled-coil domain-containing protein 70 (222 aa).

Residues 129 to 153 adopt a coiled-coil conformation; it reads NALWERDRNLLQEDKALWEEEKALW.

The chain is Coiled-coil domain-containing protein 70 from Homo sapiens (Human).